Here is a 341-residue protein sequence, read N- to C-terminus: Dihydroorotate dehydrogenase (quinone) (341 aa).

FMN contacts are provided by residues 61–65 and T85; that span reads AGLDK. K65 is a substrate binding site. Position 110 to 114 (110 to 114) interacts with substrate; sequence NRMGF. FMN contacts are provided by N138 and N171. N171 is a substrate binding site. The Nucleophile role is filled by S174. N176 contacts substrate. Positions 216 and 244 each coordinate FMN. Residue 245-246 participates in substrate binding; it reads NT. Residues G267, G296, and 317-318 each bind FMN; that span reads YS.

The protein belongs to the dihydroorotate dehydrogenase family. Type 2 subfamily. In terms of assembly, monomer. FMN serves as cofactor.

The protein localises to the cell membrane. The enzyme catalyses (S)-dihydroorotate + a quinone = orotate + a quinol. It functions in the pathway pyrimidine metabolism; UMP biosynthesis via de novo pathway; orotate from (S)-dihydroorotate (quinone route): step 1/1. Catalyzes the conversion of dihydroorotate to orotate with quinone as electron acceptor. In Pseudomonas fluorescens (strain SBW25), this protein is Dihydroorotate dehydrogenase (quinone).